The primary structure comprises 796 residues: Peroxisome proliferator-activated receptor gamma coactivator 1-alpha (796 aa).

Position 77 is an N6-acetyllysine (Lys-77). Residues 98-138 (PVDEDGLPSFDALTDGDVTTDNEASPSSMPDGTPPPQEAEE) form a disordered region. Polar residues predominate over residues 114–127 (DVTTDNEASPSSMP). An LXXLL motif motif is present at residues 142–146 (LKKLL). Lys-144 carries the post-translational modification N6-acetyllysine. Position 176 is a phosphothreonine; by AMPK (Thr-176). Residue Lys-182 is modified to N6-acetyllysine. Residues 211 to 275 (YLTTNDDPPH…NDPKGSPFEN (65 aa)) are disordered. The segment covering 217 to 235 (DPPHTKPTENRNSSRDKCA) has biased composition (basic and acidic residues). Residues 242–258 (TQPQSQHAQAKPTTLSL) show a composition bias toward polar residues. N6-acetyllysine occurs at positions 252, 269, 276, 319, 345, 411, 440, and 449. Residues 288–350 (GTAGLTPPTT…HSTKKGPEQS (63 aa)) are disordered. The interaction with PPARG stretch occupies residues 291 to 337 (GLTPPTTPPHKANQDNPFKASPKLKPSCKTVVPPPTKRARYSECSGT). Residues 348 to 796 (EQSELYAQLS…LKEAQRSLRR (449 aa)) form a mediates interaction with RNF34 region. Ser-537 is subject to Phosphoserine; by AMPK. Disordered stretches follow at residues 541 to 597 (FNSP…SSRS) and 611 to 669 (HRNS…QKQK). The segment covering 561 to 576 (QRMRSRSRSFSRHRSC) has biased composition (basic residues). Low complexity predominate over residues 577–597 (SRSPYSRSRSRSPGSRSSSRS). Basic residues predominate over residues 620–629 (SRSRSPYSRR). A compositionally biased stretch (basic and acidic residues) spans 630–669 (PRYDSYEANEHERLKRDEYRREYEKRESERAKQRERQKQK). An RRM domain is found at 675-751 (RVIYVGKIRP…TDFELYFCGR (77 aa)). An N6-acetyllysine mark is found at Lys-756 and Lys-777.

As to quaternary structure, homooligomer. Interacts with MYBBP1A; inhibits MYBBP1A transcriptional activation. Interacts with PRDM16, LPIN1 and PML. Interacts (via LXXLL motif) with RORA and RORC (via AF-2 motif); activates RORA and RORC transcriptional activation. Interacts with LRPPRC. Interacts with FOXO1. Interacts with NR5A2. In terms of processing, phosphorylation by AMPK in skeletal muscle increases activation of its own promoter. Phosphorylated by CLK2. Post-translationally, heavily acetylated by KAT2A/GCN5 under conditions of high nutrients, leading to inactivation of PPARGC1A. Deacetylated by SIRT1 in low nutrients/high NAD conditions, leading to its activation. Ubiquitinated. Ubiquitination by RNF34 induces proteasomal degradation.

The protein resides in the nucleus. It localises to the PML body. Its function is as follows. Transcriptional coactivator for steroid receptors and nuclear receptors. Greatly increases the transcriptional activity of PPARG and thyroid hormone receptor on the uncoupling protein promoter. Can regulate key mitochondrial genes that contribute to the program of adaptive thermogenesis. Plays an essential role in metabolic reprogramming in response to dietary availability through coordination of the expression of a wide array of genes involved in glucose and fatty acid metabolism. Acts as a key regulator of gluconeogenesis: stimulates hepatic gluconeogenesis by increasing the expression of gluconeogenic enzymes, and acting together with FOXO1 to promote the fasting gluconeogenic program. Induces the expression of PERM1 in the skeletal muscle in an ESRRA-dependent manner. Also involved in the integration of the circadian rhythms and energy metabolism. Required for oscillatory expression of clock genes, such as BMAL1 and NR1D1, through the coactivation of RORA and RORC, and metabolic genes, such as PDK4 and PEPCK. This chain is Peroxisome proliferator-activated receptor gamma coactivator 1-alpha (Ppargc1a), found in Rattus norvegicus (Rat).